The sequence spans 123 residues: Galanin peptides (123 aa).

The signal sequence occupies residues 1–19 (MARGSALLLASLLLAAALS). A propeptide spanning residues 20-30 (ASAGLWSPAKE) is cleaved from the precursor. Residues 46 to 80 (HAVGNHRSFSDKNGLTSKRELRPEDDMKPGSFDRS) are disordered. A compositionally biased stretch (basic and acidic residues) spans 62 to 73 (SKRELRPEDDMK). A phosphoserine mark is found at Ser-116 and Ser-117.

This sequence belongs to the galanin family.

The protein localises to the secreted. Endocrine hormone of the central and peripheral nervous systems that binds and activates the G protein-coupled receptors GALR1, GALR2, and GALR3. This small neuropeptide may regulate diverse physiologic functions including contraction of smooth muscle of the gastrointestinal and genitourinary tract, growth hormone and insulin release and adrenal secretion. The protein is Galanin peptides (GAL) of Homo sapiens (Human).